The sequence spans 175 residues: ATP synthase subunit b 1 (175 aa).

The chain crosses the membrane as a helical span at residues 26–48 (IINLAIIIGVLYVYGSKFIGNIL).

This sequence belongs to the ATPase B chain family. F-type ATPases have 2 components, F(1) - the catalytic core - and F(0) - the membrane proton channel. F(1) has five subunits: alpha(3), beta(3), gamma(1), delta(1), epsilon(1). F(0) has four main subunits: a(1), b(1), b'(1) and c(10-14). The alpha and beta chains form an alternating ring which encloses part of the gamma chain. F(1) is attached to F(0) by a central stalk formed by the gamma and epsilon chains, while a peripheral stalk is formed by the delta, b and b' chains.

It is found in the cellular thylakoid membrane. Its function is as follows. F(1)F(0) ATP synthase produces ATP from ADP in the presence of a proton or sodium gradient. F-type ATPases consist of two structural domains, F(1) containing the extramembraneous catalytic core and F(0) containing the membrane proton channel, linked together by a central stalk and a peripheral stalk. During catalysis, ATP synthesis in the catalytic domain of F(1) is coupled via a rotary mechanism of the central stalk subunits to proton translocation. In terms of biological role, component of the F(0) channel, it forms part of the peripheral stalk, linking F(1) to F(0). This Picosynechococcus sp. (strain ATCC 27264 / PCC 7002 / PR-6) (Agmenellum quadruplicatum) protein is ATP synthase subunit b 1.